A 290-amino-acid chain; its full sequence is Eukaryotic translation initiation factor 3 subunit F-2 (290 aa).

The region spanning 12 to 150 (VRLQPLVLFQ…TRLYCAVTMG (139 aa)) is the MPN domain.

It belongs to the eIF-3 subunit F family. In terms of assembly, component of the eukaryotic translation initiation factor 3 (eIF-3) complex. The eIF-3 complex interacts with pix.

The protein localises to the cytoplasm. Functionally, component of the eukaryotic translation initiation factor 3 (eIF-3) complex, which is involved in protein synthesis of a specialized repertoire of mRNAs and, together with other initiation factors, stimulates binding of mRNA and methionyl-tRNAi to the 40S ribosome. The eIF-3 complex specifically targets and initiates translation of a subset of mRNAs involved in cell proliferation. The polypeptide is Eukaryotic translation initiation factor 3 subunit F-2 (Drosophila mojavensis (Fruit fly)).